Reading from the N-terminus, the 489-residue chain is Lysine-specific permease LysP (489 aa).

Residues 2-22 (VSETKTTEAPGLRRELKARHL) lie on the Cytoplasmic side of the membrane. The helical transmembrane segment at 23-43 (TMIAIGGSIGTGLFVASGATI) threads the bilayer. Topologically, residues 44-45 (SQ) are periplasmic. A helical membrane pass occupies residues 46-66 (AGPGGALLSYMLIGLMVYFLM). Topologically, residues 67-105 (TSLGELAAYMPVSGSFATYGQNYVEEGFGFALGWNYWYN) are cytoplasmic. The helical transmembrane segment at 106–126 (WAVTIAVDLVAAQLVMSWWFP) threads the bilayer. At 127 to 128 (DT) the chain is on the periplasmic side. Residues 129 to 149 (PGWIWSALFLGVIFLLNYISV) traverse the membrane as a helical segment. At 150–161 (RGFGEAEYWFSL) the chain is on the cytoplasmic side. Residues 162–182 (IKVTTVIVFIIVGVLMIIGIF) traverse the membrane as a helical segment. At 183–197 (KGAQPAGWSNWTIGE) the chain is on the periplasmic side. A helical transmembrane segment spans residues 198 to 218 (APFAGGFAAMIGVAMIVGFSF). Over 219–244 (QGTELIGIAAGESEDPAKNIPRAVRQ) the chain is Cytoplasmic. Residues 245 to 265 (VFWRILLFYVFAILIISLIIP) traverse the membrane as a helical segment. Topologically, residues 266–290 (YTDPSLLRNDVKDISVSPFTLVFQH) are periplasmic. Residues 291-311 (AGLLSAAAVMNAVILTAVLSA) form a helical membrane-spanning segment. At 312 to 346 (GNSGMYASTRMLYTLACDGKAPRIFAKLSRGGVPR) the chain is on the cytoplasmic side. The chain crosses the membrane as a helical span at residues 347–367 (NALYATTVIAGLCFLTSMFGN). Residues 368–370 (QTV) lie on the Periplasmic side of the membrane. A helical transmembrane segment spans residues 371-391 (YLWLLNTSGMTGFIAWLGIAI). Residues 392–413 (SHYRFRRGYVLQGHDINDLPYR) are Cytoplasmic-facing. The chain crosses the membrane as a helical span at residues 414–434 (SGFFPLGPIFAFILCLIITLG). Residues 435 to 446 (QNYEAFLKDTID) are Periplasmic-facing. A helical transmembrane segment spans residues 447-467 (WGGVAATYIGIPLFLIIWFGY). Topologically, residues 468 to 489 (KLIKGTHFVRYSEMKFPQNDKK) are cytoplasmic.

The protein belongs to the amino acid-polyamine-organocation (APC) superfamily. Amino acid transporter (AAT) (TC 2.A.3.1) family. Interacts strongly with the transcriptional activator CadC in the absence of lysine or at low lysine concentrations. Interaction is markedly attenuated under increasing lysine levels. Concomitant pH-dependent protonation of periplasmic amino acids in both proteins dissolves their electrostatic connections resulting in further destabilization of the CadC/LysP interaction. Low pH promotes oligomerization of LysP.

The protein localises to the cell inner membrane. It carries out the reaction L-lysine(out) + H(+)(out) = L-lysine(in) + H(+)(in). Its function is as follows. Permease involved in lysine uptake. In addition, functions as a lysine sensor that mediates the lysine-dependent regulation of the transcriptional activator CadC. In the absence of lysine, or at low lysine concentrations, LysP inhibits CadC by an interaction with the transmembrane domain of CadC. In the presence of lysine, LysP loses its ability to interact with and inhibit CadC, and acts as a lysine permease. The chain is Lysine-specific permease LysP from Escherichia coli (strain K12).